A 259-amino-acid chain; its full sequence is V-type proton ATPase subunit D (259 aa).

Residues 214–259 (KLKEQEAAQRALEGPPKEEAGGTHSENQPPRNLLAVEEDNLPVLFN) are disordered.

The protein belongs to the V-ATPase D subunit family. In terms of assembly, V-ATPase is a heteromultimeric enzyme made up of two complexes: the ATP-hydrolytic V1 complex and the proton translocation V0 complex. The V1 complex consists of three catalytic AB heterodimers that form a heterohexamer, three peripheral stalks each consisting of EG heterodimers, one central rotor including subunits D and F, and the regulatory subunits C and H. The proton translocation complex V0 consists of the proton transport subunit a, a ring of proteolipid subunits c9c'', rotary subunit d, and The proton translocation complex V0 consists of the proton transport subunit a, a ring of proteolipid subunits c9c'', rotary subunit d, subunits e and f, and the accessory subunits vah-19/Ac45 and vah-20/PRR.

Functionally, subunit of the V1 complex of vacuolar(H+)-ATPase (V-ATPase), a multisubunit enzyme composed of a peripheral complex (V1) that hydrolyzes ATP and a membrane integral complex (V0) that translocates protons. V-ATPase is responsible for acidifying and maintaining the pH of intracellular compartments and in some cell types, is targeted to the plasma membrane, where it is responsible for acidifying the extracellular environment. This Caenorhabditis briggsae protein is V-type proton ATPase subunit D.